Consider the following 274-residue polypeptide: Putative phosphoenolpyruvate synthase regulatory protein (274 aa).

154-161 (GVSRCGKT) contacts ADP.

It belongs to the pyruvate, phosphate/water dikinase regulatory protein family. PSRP subfamily.

It catalyses the reaction [pyruvate, water dikinase] + ADP = [pyruvate, water dikinase]-phosphate + AMP + H(+). The enzyme catalyses [pyruvate, water dikinase]-phosphate + phosphate + H(+) = [pyruvate, water dikinase] + diphosphate. Bifunctional serine/threonine kinase and phosphorylase involved in the regulation of the phosphoenolpyruvate synthase (PEPS) by catalyzing its phosphorylation/dephosphorylation. The protein is Putative phosphoenolpyruvate synthase regulatory protein of Pseudomonas aeruginosa (strain LESB58).